A 645-amino-acid polypeptide reads, in one-letter code: Translation factor GUF1, mitochondrial (645 aa).

A tr-type G domain is found at 44-228; it reads ENYRNFSIVA…AIIDRIPPPT (185 aa). GTP is bound by residues 53-60, 120-124, and 174-177; these read AHVDHGKS, DTPGH, and NKID.

Belongs to the TRAFAC class translation factor GTPase superfamily. Classic translation factor GTPase family. LepA subfamily.

Its subcellular location is the mitochondrion inner membrane. It catalyses the reaction GTP + H2O = GDP + phosphate + H(+). Its function is as follows. Promotes mitochondrial protein synthesis. May act as a fidelity factor of the translation reaction, by catalyzing a one-codon backward translocation of tRNAs on improperly translocated ribosomes. Binds to mitochondrial ribosomes in a GTP-dependent manner. The protein is Translation factor GUF1, mitochondrial of Saccharomyces cerevisiae (strain RM11-1a) (Baker's yeast).